The primary structure comprises 142 residues: Large ribosomal subunit protein uL13 (142 aa).

It belongs to the universal ribosomal protein uL13 family. As to quaternary structure, part of the 50S ribosomal subunit.

This protein is one of the early assembly proteins of the 50S ribosomal subunit, although it is not seen to bind rRNA by itself. It is important during the early stages of 50S assembly. This is Large ribosomal subunit protein uL13 from Xylella fastidiosa (strain 9a5c).